A 430-amino-acid polypeptide reads, in one-letter code: BSD domain-containing protein 1 (430 aa).

A phosphoserine mark is found at Ser92 and Ser166. The BSD domain occupies 146–198 (WLSQFCLEEKKGEISELLVGSPSIRALYTKMVPAAVSHSEFWHRYFYKVHQLE). Disordered regions lie at residues 247-298 (STFP…APEA) and 319-398 (LAVD…WEKD). Positions 276 to 291 (PSESSESISLVTQIAN) are enriched in polar residues. Over residues 350–367 (PPARVETLREEAPTDLRV) the composition is skewed to basic and acidic residues. At Thr356 the chain carries Phosphothreonine. Over residues 371–390 (NSDSGKSTPSNNGKKGSSTD) the composition is skewed to polar residues. Residues Ser387, Ser388, and Ser418 each carry the phosphoserine modification.

The chain is BSD domain-containing protein 1 (BSDC1) from Homo sapiens (Human).